The chain runs to 255 residues: Indole-3-glycerol phosphate synthase (255 aa).

The protein belongs to the TrpC family.

The catalysed reaction is 1-(2-carboxyphenylamino)-1-deoxy-D-ribulose 5-phosphate + H(+) = (1S,2R)-1-C-(indol-3-yl)glycerol 3-phosphate + CO2 + H2O. Its pathway is amino-acid biosynthesis; L-tryptophan biosynthesis; L-tryptophan from chorismate: step 4/5. The sequence is that of Indole-3-glycerol phosphate synthase from Streptococcus pneumoniae (strain Taiwan19F-14).